We begin with the raw amino-acid sequence, 704 residues long: Polyribonucleotide nucleotidyltransferase (704 aa).

Residues Asp-487 and Asp-493 each contribute to the Mg(2+) site. In terms of domain architecture, KH spans 554-613 (PRLLTIKIHPDKIREVIGKGGSTIQAITKETGTQIDIQDDGTIIIASVNAIAAQAAKSRI). Residues 623–691 (GRIYEGKVAK…KQGRIRLSIK (69 aa)) form the S1 motif domain.

This sequence belongs to the polyribonucleotide nucleotidyltransferase family. In terms of assembly, component of the RNA degradosome, which is a multiprotein complex involved in RNA processing and mRNA degradation. It depends on Mg(2+) as a cofactor.

It is found in the cytoplasm. The catalysed reaction is RNA(n+1) + phosphate = RNA(n) + a ribonucleoside 5'-diphosphate. Functionally, involved in mRNA degradation. Catalyzes the phosphorolysis of single-stranded polyribonucleotides processively in the 3'- to 5'-direction. This is Polyribonucleotide nucleotidyltransferase from Xanthomonas oryzae pv. oryzae (strain MAFF 311018).